Here is a 639-residue protein sequence, read N- to C-terminus: Cystathionine gamma-synthase (639 aa).

Lys443 carries the post-translational modification N6-(pyridoxal phosphate)lysine.

It belongs to the trans-sulfuration enzymes family. MET7 subfamily. Pyridoxal 5'-phosphate is required as a cofactor.

The protein resides in the cytoplasm. The protein localises to the nucleus. It catalyses the reaction O-succinyl-L-homoserine + L-cysteine = L,L-cystathionine + succinate + H(+). The protein operates within amino-acid biosynthesis; L-methionine biosynthesis via de novo pathway; L-cystathionine from O-succinyl-L-homoserine: step 1/1. Functionally, catalyzes the formation of L-cystathionine from O-succinyl-L-homoserine (OSHS) and L-cysteine, via a gamma-replacement reaction. In the absence of thiol, catalyzes gamma-elimination to form 2-oxobutanoate, succinate and ammonia. The polypeptide is Cystathionine gamma-synthase (Saccharomyces cerevisiae (strain ATCC 204508 / S288c) (Baker's yeast)).